Reading from the N-terminus, the 261-residue chain is tRNA pseudouridine synthase A (261 aa).

Asp-51 (nucleophile) is an active-site residue. Tyr-109 lines the substrate pocket.

This sequence belongs to the tRNA pseudouridine synthase TruA family. In terms of assembly, homodimer.

It carries out the reaction uridine(38/39/40) in tRNA = pseudouridine(38/39/40) in tRNA. Formation of pseudouridine at positions 38, 39 and 40 in the anticodon stem and loop of transfer RNAs. This chain is tRNA pseudouridine synthase A, found in Shewanella baltica (strain OS195).